The chain runs to 283 residues: MQIFGKILGGFFGFLFGGFFGAALGIFIGHQFDKAKRMANSGFTFQTGGASQTQRQAEFFHAAYAVMGHVAKAKGQVTREEIQLASMMMDRMNLSDEQKREAQEAFREGKESDFPLRETLRNIRSITGGRYDLLQFFLELQIAAAIADGDIHPSERDVLHIVAEELGFSAEQLEKRLRMQEAAFRFQQGGGFSGHQSGGSHQQGQWQQASSASQLKDAYNLLGISEDADPKTIKRAHRKLMNEHHPDKLVAKGLPPEMMNMAKEKAQEIQAAYDLIKKEKGIK.

At 1-6 the chain is on the periplasmic side; that stretch reads MQIFGK. A helical transmembrane segment spans residues 7–30; that stretch reads ILGGFFGFLFGGFFGAALGIFIGH. Over 31 to 283 the chain is Cytoplasmic; it reads QFDKAKRMAN…DLIKKEKGIK (253 aa). A compositionally biased stretch (gly residues) spans 188–197; the sequence is QGGGFSGHQS. A disordered region spans residues 188–210; it reads QGGGFSGHQSGGSHQQGQWQQAS. The span at 198–210 shows a compositional bias: low complexity; the sequence is GGSHQQGQWQQAS. One can recognise a J domain in the interval 217 to 283; the sequence is DAYNLLGISE…DLIKKEKGIK (67 aa).

In terms of assembly, homodimer.

It is found in the cell inner membrane. Regulatory DnaK co-chaperone. Direct interaction between DnaK and DjlA is needed for the induction of the wcaABCDE operon, involved in the synthesis of a colanic acid polysaccharide capsule, possibly through activation of the RcsB/RcsC phosphotransfer signaling pathway. The colanic acid capsule may help the bacterium survive conditions outside the host. In Aliivibrio fischeri (strain ATCC 700601 / ES114) (Vibrio fischeri), this protein is Co-chaperone protein DjlA.